Reading from the N-terminus, the 486-residue chain is Aspartyl/glutamyl-tRNA(Asn/Gln) amidotransferase subunit B (486 aa).

It belongs to the GatB/GatE family. GatB subfamily. Heterotrimer of A, B and C subunits.

The catalysed reaction is L-glutamyl-tRNA(Gln) + L-glutamine + ATP + H2O = L-glutaminyl-tRNA(Gln) + L-glutamate + ADP + phosphate + H(+). It catalyses the reaction L-aspartyl-tRNA(Asn) + L-glutamine + ATP + H2O = L-asparaginyl-tRNA(Asn) + L-glutamate + ADP + phosphate + 2 H(+). In terms of biological role, allows the formation of correctly charged Asn-tRNA(Asn) or Gln-tRNA(Gln) through the transamidation of misacylated Asp-tRNA(Asn) or Glu-tRNA(Gln) in organisms which lack either or both of asparaginyl-tRNA or glutaminyl-tRNA synthetases. The reaction takes place in the presence of glutamine and ATP through an activated phospho-Asp-tRNA(Asn) or phospho-Glu-tRNA(Gln). The sequence is that of Aspartyl/glutamyl-tRNA(Asn/Gln) amidotransferase subunit B from Leptospira borgpetersenii serovar Hardjo-bovis (strain L550).